Reading from the N-terminus, the 331-residue chain is High-affinity nickel-transport protein NixA (331 aa).

The Cytoplasmic portion of the chain corresponds to 1-5 (MKLWF). The chain crosses the membrane as a helical span at residues 6–26 (PYFLAIVFLHALGLALLFMAN). Residues 27-33 (NASFYAA) lie on the Periplasmic side of the membrane. Residues 34-54 (ASMAYMLGAKHAFDADHIACI) traverse the membrane as a helical segment. Over 55–66 (DNTIRKLTQQGK) the chain is Cytoplasmic. The helical transmembrane segment at 67–87 (NAYGVGFYFSMGHSSVVILMT) threads the bilayer. At 88 to 113 (IISAFAIAWAKEHTPMLEEIGGVVGT) the chain is on the periplasmic side. Residues 114-135 (LVSGLFLLIIGLLNAIILLDLL) traverse the membrane as a helical segment. Over 136-178 (KIFKKSHSNESLSQQQNEEIERLLTSRGLLNRFFKPLFNFVSK) the chain is Cytoplasmic. A helical transmembrane segment spans residues 179 to 199 (SWHIYPIGFLFGLGFDTASEI). Residues 200–225 (ALLALSSSAIKVSMVGMLSLPILFAA) are Periplasmic-facing. A helical membrane pass occupies residues 226 to 246 (GMSLFDTLDGAFMLKAYDWAF). Over 247–252 (KTPLRK) the chain is Cytoplasmic. Residues 253 to 273 (IYYNISITALSVFIALFIGLI) traverse the membrane as a helical segment. At 274-302 (ELFQVVSEKLHLKFENRLLRALQSLEFTD) the chain is on the periplasmic side. The chain crosses the membrane as a helical span at residues 303–322 (LGYYLVGLFVIAFLGSFFLW). Residues 323-331 (KIKFSKLES) lie on the Cytoplasmic side of the membrane.

It belongs to the NiCoT transporter (TC 2.A.52) family.

It is found in the cell inner membrane. Its function is as follows. High-affinity nickel intake protein. Imports nickel ions in an energy-dependent fashion. Necessary for the expression of catalytically active urease. This Helicobacter pylori (strain ATCC 700392 / 26695) (Campylobacter pylori) protein is High-affinity nickel-transport protein NixA (nixA).